The chain runs to 325 residues: UPF0285 protein MM_0679 (325 aa).

This sequence belongs to the UPF0285 family.

This is UPF0285 protein MM_0679 from Methanosarcina mazei (strain ATCC BAA-159 / DSM 3647 / Goe1 / Go1 / JCM 11833 / OCM 88) (Methanosarcina frisia).